The chain runs to 257 residues: High affinity immunoglobulin epsilon receptor subunit alpha (257 aa).

An N-terminal signal peptide occupies residues 1–25; sequence MAPAMESPTLLCVALLFFAPDGVLA. Residues 26-205 lie on the Extracellular side of the membrane; the sequence is VPQKPKVSLN…KAPREKYWLQ (180 aa). Ig-like domains lie at 30-110 and 111-193; these read PKVS…EVFS and DWLL…LNIT. Residues N46, N67, N75, N99, N160, N165, and N191 are each glycosylated (N-linked (GlcNAc...) asparagine). C51 and C93 are joined by a disulfide. The cysteines at positions 132 and 176 are disulfide-linked. Residues 206-224 form a helical membrane-spanning segment; the sequence is FFIPLLVVILFAVDTGLFI. The Cytoplasmic portion of the chain corresponds to 225 to 257; that stretch reads STQQQVTFLLKIKRTRKGFRLLNPHPKPNPKNN.

As to quaternary structure, tetramer of an alpha chain, a beta chain, and two disulfide linked gamma chains. Interacts with IGHE (via CH3 region). In terms of tissue distribution, expressed in eosinophils.

The protein resides in the cell membrane. Its function is as follows. High-affinity receptor for immunoglobulin epsilon/IgE. Mediates IgE effector functions in myeloid cells. Upon IgE binding and antigen/allergen cross-linking initiates signaling pathways that lead to myeloid cell activation and differentiation. On mast cells, basophils and eosinophils stimulates the secretion of vasoactive amines, lipid mediators and cytokines that contribute to inflammatory response, tissue remodeling and cytotoxicity against microbes. Triggers the immediate hypersensitivity response to allergens as a host defense mechanism against helminth parasites, pathogenic bacteria and venom toxicity. When dysregulated, it can elicit harmful life-threatening allergic and anaphylactic reactions. The chain is High affinity immunoglobulin epsilon receptor subunit alpha (FCER1A) from Homo sapiens (Human).